The following is a 264-amino-acid chain: MDLRPIGIFDSGVGGLTVLKRLVEVLPGEDYIYFGDTKRVPYGDRSEEEIKKFAKQILNFMREQKVKAVVIACNTTCAVINKSEYDVVLFDVLKAGAESAALYTINKKIGVIATTRTVESKSYEKNIKIIDKNIEVYQKACPEFVPLIEKGLYNSPIAYETASKCLKELKEKDIDTLVLGCTHYPLMASVIEEIMGENVKIVDPAIKLAYDVKDYLLKKDLLNPQIRGKAEFFVSGDKDNFIKTAEMLLGEKIENVLHVDIEKY.

Substrate-binding positions include D10–S11 and Y42–G43. C73 acts as the Proton donor/acceptor in catalysis. N74–T75 provides a ligand contact to substrate. The Proton donor/acceptor role is filled by C181. Residue T182–H183 participates in substrate binding.

This sequence belongs to the aspartate/glutamate racemases family.

The catalysed reaction is L-glutamate = D-glutamate. It participates in cell wall biogenesis; peptidoglycan biosynthesis. Its function is as follows. Provides the (R)-glutamate required for cell wall biosynthesis. The chain is Glutamate racemase from Thermoanaerobacter sp. (strain X514).